A 514-amino-acid chain; its full sequence is Beta-glucosidase 21 (514 aa).

An N-terminal signal peptide occupies residues 1 to 25 (MERPLHLLLVFLSSPWLLLLQGVSS). Positions 47 and 147 each coordinate a beta-D-glucoside. Glu193 acts as the Proton donor in catalysis. The cysteines at positions 212 and 220 are disulfide-linked. N-linked (GlcNAc...) asparagine glycans are attached at residues Asn219 and Asn224. A beta-D-glucoside contacts are provided by Tyr336 and Glu406. Glu406 (nucleophile) is an active-site residue. A glycan (N-linked (GlcNAc...) asparagine) is linked at Asn407. A beta-D-glucoside-binding residues include Trp448 and Phe465. A glycan (N-linked (GlcNAc...) asparagine) is linked at Asn494.

The protein belongs to the glycosyl hydrolase 1 family.

The enzyme catalyses Hydrolysis of terminal, non-reducing beta-D-glucosyl residues with release of beta-D-glucose.. This chain is Beta-glucosidase 21 (BGLU21), found in Oryza sativa subsp. japonica (Rice).